A 542-amino-acid chain; its full sequence is MAKTPAKAPAAAAKPAAVKKPAAPKAAAAPKAAAVATPAAKKPAAPKAAPVSKVAGTREKPDTIRAGTGKLVQVIGAVVDVEFTGELPAILNALETVNIATGQRLVFEVAQHLGQNTVRAIAMDATEGLVRGQEVRDTGQSIRVPVGPGTLGRIMNVIGEPIDEQGPIKSDIFRTIHRDAPTFAEQTNTAEVLVTGIKVIDLMCPYTKGGKIGLFGGAGVGKTVTMQELINNIAKAYGGYSVLAGVGERTREGNDLYHEMIESNVNVDPKINGSTEGSRCALVYGQMNEPPGARARVALTGLSIAEYFRDEEGKDVLLFVDNIFRFTQAGAEVSALLGRIPSAVGYQPTLATEMGNLQERITSTNKGSITSVQAIYVPADDLTDPAPAASFAHLDATTVLSRDIAAQAIFPAVDPLDSTSRIMDPLIIGQEHYDVARSVQEVLQQYKSLKDIIAILGMDELSEEDKLTVARARKISRFLSQPFHVAEQFTNTPGAFVSLKDTIRSFKGIVDGEYDHLPEAAFYMVGPIEEAVAKAEKLAGEA.

The segment covering 1–50 has biased composition (low complexity); that stretch reads MAKTPAKAPAAAAKPAAVKKPAAPKAAAAPKAAAVATPAAKKPAAPKAAP. The segment at 1 to 61 is disordered; that stretch reads MAKTPAKAPA…SKVAGTREKP (61 aa). Residue 216 to 223 participates in ATP binding; that stretch reads GGAGVGKT.

The protein belongs to the ATPase alpha/beta chains family. In terms of assembly, F-type ATPases have 2 components, CF(1) - the catalytic core - and CF(0) - the membrane proton channel. CF(1) has five subunits: alpha(3), beta(3), gamma(1), delta(1), epsilon(1). CF(0) has three main subunits: a(1), b(2) and c(9-12). The alpha and beta chains form an alternating ring which encloses part of the gamma chain. CF(1) is attached to CF(0) by a central stalk formed by the gamma and epsilon chains, while a peripheral stalk is formed by the delta and b chains.

The protein localises to the cell inner membrane. It catalyses the reaction ATP + H2O + 4 H(+)(in) = ADP + phosphate + 5 H(+)(out). Functionally, produces ATP from ADP in the presence of a proton gradient across the membrane. The catalytic sites are hosted primarily by the beta subunits. This Caulobacter sp. (strain K31) protein is ATP synthase subunit beta.